We begin with the raw amino-acid sequence, 126 residues long: UPF0102 protein P9303_16141 (126 aa).

This sequence belongs to the UPF0102 family.

This is UPF0102 protein P9303_16141 from Prochlorococcus marinus (strain MIT 9303).